The primary structure comprises 1386 residues: DNA-directed RNA polymerase subunit beta'' (1386 aa).

Cys-220, Cys-289, Cys-296, and Cys-299 together coordinate Zn(2+).

Belongs to the RNA polymerase beta' chain family. RpoC2 subfamily. In terms of assembly, in plastids the minimal PEP RNA polymerase catalytic core is composed of four subunits: alpha, beta, beta', and beta''. When a (nuclear-encoded) sigma factor is associated with the core the holoenzyme is formed, which can initiate transcription. It depends on Zn(2+) as a cofactor.

The protein localises to the plastid. It localises to the chloroplast. The enzyme catalyses RNA(n) + a ribonucleoside 5'-triphosphate = RNA(n+1) + diphosphate. Its function is as follows. DNA-dependent RNA polymerase catalyzes the transcription of DNA into RNA using the four ribonucleoside triphosphates as substrates. The chain is DNA-directed RNA polymerase subunit beta'' from Marchantia polymorpha (Common liverwort).